The chain runs to 156 residues: SsrA-binding protein (156 aa).

Belongs to the SmpB family.

It is found in the cytoplasm. In terms of biological role, required for rescue of stalled ribosomes mediated by trans-translation. Binds to transfer-messenger RNA (tmRNA), required for stable association of tmRNA with ribosomes. tmRNA and SmpB together mimic tRNA shape, replacing the anticodon stem-loop with SmpB. tmRNA is encoded by the ssrA gene; the 2 termini fold to resemble tRNA(Ala) and it encodes a 'tag peptide', a short internal open reading frame. During trans-translation Ala-aminoacylated tmRNA acts like a tRNA, entering the A-site of stalled ribosomes, displacing the stalled mRNA. The ribosome then switches to translate the ORF on the tmRNA; the nascent peptide is terminated with the 'tag peptide' encoded by the tmRNA and targeted for degradation. The ribosome is freed to recommence translation, which seems to be the essential function of trans-translation. Required for trans-translation. Probably required for sporulation; deletion of the gene for tmRNA impairs sporulation via its effect on trans-translation, and as smpB is required for trans-translation under non-stress conditions, it is also probably required during sporulation. This Bacillus subtilis (strain 168) protein is SsrA-binding protein.